A 570-amino-acid chain; its full sequence is Proline--tRNA ligase (570 aa).

The protein belongs to the class-II aminoacyl-tRNA synthetase family. ProS type 1 subfamily. Homodimer.

Its subcellular location is the cytoplasm. The enzyme catalyses tRNA(Pro) + L-proline + ATP = L-prolyl-tRNA(Pro) + AMP + diphosphate. Catalyzes the attachment of proline to tRNA(Pro) in a two-step reaction: proline is first activated by ATP to form Pro-AMP and then transferred to the acceptor end of tRNA(Pro). As ProRS can inadvertently accommodate and process non-cognate amino acids such as alanine and cysteine, to avoid such errors it has two additional distinct editing activities against alanine. One activity is designated as 'pretransfer' editing and involves the tRNA(Pro)-independent hydrolysis of activated Ala-AMP. The other activity is designated 'posttransfer' editing and involves deacylation of mischarged Ala-tRNA(Pro). The misacylated Cys-tRNA(Pro) is not edited by ProRS. In Geobacter metallireducens (strain ATCC 53774 / DSM 7210 / GS-15), this protein is Proline--tRNA ligase.